The chain runs to 194 residues: MDEDGLPLMGSGIDLTKVPAIQQKRTVAFLNQFVVHTVQFLNRFSTVCEEKLADLSLRIQQIETTLNILDAKLSSIPGLDDVTVEVSPLNVTSVTNGAHPEATSEQPQQNSTQDSGLQESEVSAENILTVAKDPRYARYLKMVQVGVPVMAIRNKMISEGLDPDLLERPDAPVPDGESEKTVEESSDSESSFSD.

M1 carries the N-acetylmethionine modification. Positions 46–74 (TVCEEKLADLSLRIQQIETTLNILDAKLS) form a coiled coil. Disordered regions lie at residues 93 to 121 (SVTN…QESE) and 159 to 194 (EGLD…SFSD). Polar residues predominate over residues 103–121 (TSEQPQQNSTQDSGLQESE).

It belongs to the CCDC53 family. Component of the WASH core complex also described as WASH regulatory complex (SHRC) composed of WASH (WASHC1, WASH2P or WASH3P), WASHC2 (WASHC2A or WASHC2C), WASHC3, WASHC4 and WASHC5. The WASH core complex associates via WASHC2 with the F-actin-capping protein dimer (formed by CAPZA1, CAPZA2 or CAPZA3 and CAPZB) in a transient or substoichiometric manner which was initially described as WASH complex.

It is found in the early endosome. Acts as a component of the WASH core complex that functions as a nucleation-promoting factor (NPF) at the surface of endosomes, where it recruits and activates the Arp2/3 complex to induce actin polymerization, playing a key role in the fission of tubules that serve as transport intermediates during endosome sorting. This Homo sapiens (Human) protein is WASH complex subunit 3.